The following is a 358-amino-acid chain: Triacylglycerol lipase (358 aa).

The first 39 residues, 1-39, serve as a signal peptide directing secretion; sequence MVRSMRSRVAARAVAWALAVMPLAGAAGLTMAASPAAVA. The region spanning 48–327 is the AB hydrolase-1 domain; the sequence is YPVILVHGLA…TSYHWNHLDE (280 aa). L56 is a substrate binding site. S126 acts as the Nucleophile in catalysis. Residue Q127 participates in substrate binding. Residues C229 and C308 are joined by a disulfide bond. D280 contributes to the Ca(2+) binding site. Catalysis depends on charge relay system residues D302 and H324. Ca(2+)-binding residues include D326, Q330, and V334.

The protein belongs to the AB hydrolase superfamily. Pseudomonas lipase family. As to quaternary structure, monomer. Interacts with lipase-specific foldase Lif. Ca(2+) is required as a cofactor.

It localises to the secreted. The catalysed reaction is a triacylglycerol + H2O = a diacylglycerol + a fatty acid + H(+). Catalyzes the hydrolysis of triacylglycerol. This is Triacylglycerol lipase from Burkholderia plantarii.